Consider the following 420-residue polypeptide: Xyloglucan O-acetyltransferase 4 (420 aa).

The Cytoplasmic portion of the chain corresponds to 1–30 (MTMHEKMKLPSCSCSAFKCGKKDRWLNMER). Residues 31–51 (PIPFLLIGLTTILSVFILYTL) traverse the membrane as a helical; Signal-anchor for type II membrane protein segment. At 52–420 (NPLKFVIEHN…LLLAVLRRLD (369 aa)) the chain is on the lumenal side. Intrachain disulfides connect Cys-78–Cys-128, Cys-99–Cys-164, Cys-108–Cys-400, and Cys-323–Cys-396. N-linked (GlcNAc...) asparagine glycosylation is present at Asn-96. The GDS motif motif lies at 151–153 (GDS). Residue Ser-153 is the Nucleophile of the active site. N-linked (GlcNAc...) asparagine glycans are attached at residues Asn-192, Asn-212, Asn-270, and Asn-324. The active-site Proton donor is the Asp-395. Residues 395 to 398 (DCVH) carry the DXXH motif motif. The active-site Proton acceptor is His-398.

This sequence belongs to the PC-esterase family. TBL subfamily.

The protein resides in the golgi apparatus membrane. Functionally, xyloglucan acetyltransferase that catalyzes the acetylation of fucosylated Gal residues on xyloglucan side chains. Predominantly catalyze 6-O-monoacetylation of Gal residues in the Fuc-Gal-Xyl trisaccharide side chains of xyloglucan oligomers. The protein is Xyloglucan O-acetyltransferase 4 of Populus trichocarpa (Western balsam poplar).